We begin with the raw amino-acid sequence, 241 residues long: Meiotically up-regulated gene 130 protein (241 aa).

The protein resides in the mitochondrion. Has a role in meiosis. The chain is Meiotically up-regulated gene 130 protein (mug130) from Schizosaccharomyces pombe (strain 972 / ATCC 24843) (Fission yeast).